The chain runs to 120 residues: Putative membrane protein insertion efficiency factor (120 aa).

The tract at residues Gly93–Val120 is disordered.

The protein belongs to the UPF0161 family.

It is found in the cell membrane. In terms of biological role, could be involved in insertion of integral membrane proteins into the membrane. This Mycobacterium bovis (strain ATCC BAA-935 / AF2122/97) protein is Putative membrane protein insertion efficiency factor.